The following is a 149-amino-acid chain: Arginine regulator (149 aa).

This sequence belongs to the ArgR family.

It localises to the cytoplasm. The protein operates within amino-acid degradation; L-arginine degradation via ADI pathway. In terms of biological role, regulates the transcription of the arc operon, involved in arginine catabolism. The protein is Arginine regulator (argR1) of Bacillus cereus (strain ATCC 10987 / NRS 248).